Consider the following 896-residue polypeptide: MKKLSTNQIRKIWLDFFISKNHYFLETVSLIPVDDPSLLWINSGVATLKPYFDGRKTPPSPRLTNSQKAIRTNDIENVGVTARHHTMFEMLGNFSIGDYFKKEAIELAWELLTDKKYFDIDKNKLYITVFNEDTEAYNIWKDVIKIDEDHIFRLSRKTNFWDVGQGPCGPNTEIFYDRGEIWDPNKIGPRLISDDIENDRYIEVWNIVFSQFNNDGNNNYVELPRKNIDTGAGLERFASIFQNTPTNFETDIFYPTIKKVEQLTNNQFKYSIDNYFNPNKKQTRINTAFKVIADHIRATVFAISDGVFPGNKDRGYIIRRLIRRSCVFGKELGIKQAFLYKLVDSVIESMKEFYPYLIDKKTLVEQTIKDEEEKFLKTLSKGYDLLENIIKTKNTVSDKDALLLFESYGFPIEQTIEISELSNVTVDVEGFKKLLEQTKQATRNARKDLKAWDKQNELFTKLKVESEFTGWSETSRDNAKVIYMFTDQKQVESITNQEVFVILDKTPFYAEKGGQAADSGIIFNDQMKGFVIDVQQGPTHQNIHRIKVQGTLKVNDLINCRVDEEKRIYTMKNHSGTHMIHYALREVLGTSVMQSGSYNDENGLRMDFTYHRLPTNQELLKAQNLVLEKIKNKIDRQTYFCSLEESVKKHQALAFFTEKYDQIVRVIKFGDFSSELCGGTHVNNTSEIEDFIITGIESKGSGLYRIKCLTSFRAVNEYLNEQFKVYKDQAESIIDKYNQNKDLLKNDQLENIYLQIKNTTINKDNLLVIKNLLDQSKEVNKDYDKKVNDLITANKLLKYKDLTPSLNKDNINEIRLETTDLNIKDLKQLADDLRNKYNDLIVILLSSTNENTFIVVAVSQSLQNKYKAIDIFNNLEGYETKGGGNANLAQGKFVKK.

Zn(2+) is bound by residues H574, H578, C677, and H681.

The protein belongs to the class-II aminoacyl-tRNA synthetase family. Requires Zn(2+) as cofactor.

It localises to the cytoplasm. The enzyme catalyses tRNA(Ala) + L-alanine + ATP = L-alanyl-tRNA(Ala) + AMP + diphosphate. Catalyzes the attachment of alanine to tRNA(Ala) in a two-step reaction: alanine is first activated by ATP to form Ala-AMP and then transferred to the acceptor end of tRNA(Ala). Also edits incorrectly charged Ser-tRNA(Ala) and Gly-tRNA(Ala) via its editing domain. The protein is Alanine--tRNA ligase of Mycoplasma mycoides subsp. mycoides SC (strain CCUG 32753 / NCTC 10114 / PG1).